A 459-amino-acid polypeptide reads, in one-letter code: Ribulose bisphosphate carboxylase (459 aa).

Asn-111 serves as a coordination point for substrate. The active-site Proton acceptor is Lys-166. Residue Lys-168 coordinates substrate. Residues Lys-191, Asp-193, and Glu-194 each coordinate Mg(2+). Lys-191 is subject to N6-carboxylysine. His-287 acts as the Proton acceptor in catalysis. Substrate-binding residues include Arg-288, His-321, and Ser-368.

It belongs to the RuBisCO large chain family. Type II subfamily. As to quaternary structure, homodimer. Requires Mg(2+) as cofactor.

It catalyses the reaction 2 (2R)-3-phosphoglycerate + 2 H(+) = D-ribulose 1,5-bisphosphate + CO2 + H2O. It carries out the reaction D-ribulose 1,5-bisphosphate + O2 = 2-phosphoglycolate + (2R)-3-phosphoglycerate + 2 H(+). Its function is as follows. RuBisCO catalyzes two reactions: the carboxylation of D-ribulose 1,5-bisphosphate, the primary event in carbon dioxide fixation, as well as the oxidative fragmentation of the pentose substrate. Both reactions occur simultaneously and in competition at the same active site. The sequence is that of Ribulose bisphosphate carboxylase from Cereibacter sphaeroides (Rhodobacter sphaeroides).